Reading from the N-terminus, the 373-residue chain is Chorismate synthase (373 aa).

Residue arginine 46 participates in NADP(+) binding. FMN contacts are provided by residues 123–125 (RSS), 251–252 (NA), glycine 295, 310–314 (KPTPS), and arginine 337.

It belongs to the chorismate synthase family. Requires FMNH2 as cofactor.

The catalysed reaction is 5-O-(1-carboxyvinyl)-3-phosphoshikimate = chorismate + phosphate. The protein operates within metabolic intermediate biosynthesis; chorismate biosynthesis; chorismate from D-erythrose 4-phosphate and phosphoenolpyruvate: step 7/7. Its function is as follows. Catalyzes the anti-1,4-elimination of the C-3 phosphate and the C-6 proR hydrogen from 5-enolpyruvylshikimate-3-phosphate (EPSP) to yield chorismate, which is the branch point compound that serves as the starting substrate for the three terminal pathways of aromatic amino acid biosynthesis. This reaction introduces a second double bond into the aromatic ring system. This chain is Chorismate synthase, found in Methanococcus maripaludis (strain C7 / ATCC BAA-1331).